The following is a 222-amino-acid chain: Large ribosomal subunit protein uL4 (222 aa).

This sequence belongs to the universal ribosomal protein uL4 family. Part of the 50S ribosomal subunit.

In terms of biological role, one of the primary rRNA binding proteins, this protein initially binds near the 5'-end of the 23S rRNA. It is important during the early stages of 50S assembly. It makes multiple contacts with different domains of the 23S rRNA in the assembled 50S subunit and ribosome. Forms part of the polypeptide exit tunnel. The polypeptide is Large ribosomal subunit protein uL4 (Chlamydia trachomatis serovar L2 (strain ATCC VR-902B / DSM 19102 / 434/Bu)).